We begin with the raw amino-acid sequence, 396 residues long: uncharacterized protein (396 aa).

2 helical membrane-spanning segments follow: residues leucine 27–leucine 47 and phenylalanine 69–phenylalanine 89. An HXXXXD motif motif is present at residues histidine 117–aspartate 122. Helical transmembrane passes span tryptophan 123–leucine 143 and leucine 372–methionine 392.

It belongs to the 1-acyl-sn-glycerol-3-phosphate acyltransferase family.

It localises to the membrane. This is an uncharacterized protein from Saccharomyces cerevisiae (strain ATCC 204508 / S288c) (Baker's yeast).